The following is a 226-amino-acid chain: Fibrillarin-like rRNA/tRNA 2'-O-methyltransferase (226 aa).

Residues 85–86, 104–105, 129–130, and 149–152 contribute to the S-adenosyl-L-methionine site; these read TT, EF, DA, and DVAQ.

Belongs to the methyltransferase superfamily. Fibrillarin family. In terms of assembly, interacts with nop5. Component of box C/D small ribonucleoprotein (sRNP) particles that contain rpl7ae, FlpA and nop5, plus a guide RNA.

In terms of biological role, involved in pre-rRNA and tRNA processing. Utilizes the methyl donor S-adenosyl-L-methionine to catalyze the site-specific 2'-hydroxyl methylation of ribose moieties in rRNA and tRNA. Site specificity is provided by a guide RNA that base pairs with the substrate. Methylation occurs at a characteristic distance from the sequence involved in base pairing with the guide RNA. The polypeptide is Fibrillarin-like rRNA/tRNA 2'-O-methyltransferase (Thermococcus onnurineus (strain NA1)).